Here is a 190-residue protein sequence, read N- to C-terminus: GTP cyclohydrolase 1 (190 aa).

Positions 75, 78, and 146 each coordinate Zn(2+).

The protein belongs to the GTP cyclohydrolase I family. In terms of assembly, toroid-shaped homodecamer, composed of two pentamers of five dimers.

The enzyme catalyses GTP + H2O = 7,8-dihydroneopterin 3'-triphosphate + formate + H(+). The protein operates within cofactor biosynthesis; 7,8-dihydroneopterin triphosphate biosynthesis; 7,8-dihydroneopterin triphosphate from GTP: step 1/1. In Campylobacter jejuni (strain RM1221), this protein is GTP cyclohydrolase 1.